Here is a 116-residue protein sequence, read N- to C-terminus: Ribulose bisphosphate carboxylase small subunit 1 (116 aa).

The protein belongs to the RuBisCO small chain family. Heterohexadecamer of 8 large and 8 small subunits.

The protein resides in the cytoplasm. In terms of biological role, ruBisCO catalyzes two reactions: the carboxylation of D-ribulose 1,5-bisphosphate, the primary event in carbon dioxide fixation, as well as the oxidative fragmentation of the pentose substrate. Both reactions occur simultaneously and in competition at the same active site. Although the small subunit is not catalytic it is essential for maximal activity. Can replace the endogenous type I ccbS gene in H.neapolitanus, reconstituting RuBisCO with about 10% of normal activity; the active enzyme is targeted to carboxysomes. The sequence is that of Ribulose bisphosphate carboxylase small subunit 1 from Hydrogenovibrio crunogenus (strain DSM 25203 / XCL-2) (Thiomicrospira crunogena).